The chain runs to 240 residues: Large ribosomal subunit protein bL25 (240 aa).

Residues 1-24 (MATVMEFKATARPKSGKGAARAER) form a disordered region.

This sequence belongs to the bacterial ribosomal protein bL25 family. CTC subfamily. As to quaternary structure, part of the 50S ribosomal subunit; part of the 5S rRNA/L5/L18/L25 subcomplex. Contacts the 5S rRNA. Binds to the 5S rRNA independently of L5 and L18.

In terms of biological role, this is one of the proteins that binds to the 5S RNA in the ribosome where it forms part of the central protuberance. This chain is Large ribosomal subunit protein bL25, found in Rhodopseudomonas palustris (strain HaA2).